The sequence spans 97 residues: Co-chaperonin GroES (97 aa).

The protein belongs to the GroES chaperonin family. Heptamer of 7 subunits arranged in a ring. Interacts with the chaperonin GroEL.

It localises to the cytoplasm. Its function is as follows. Together with the chaperonin GroEL, plays an essential role in assisting protein folding. The GroEL-GroES system forms a nano-cage that allows encapsulation of the non-native substrate proteins and provides a physical environment optimized to promote and accelerate protein folding. GroES binds to the apical surface of the GroEL ring, thereby capping the opening of the GroEL channel. This chain is Co-chaperonin GroES, found in Gemmatimonas aurantiaca (strain DSM 14586 / JCM 11422 / NBRC 100505 / T-27).